A 348-amino-acid chain; its full sequence is Protein RecA (348 aa).

Gly66–Thr73 lines the ATP pocket.

Belongs to the RecA family.

Its subcellular location is the cytoplasm. In terms of biological role, can catalyze the hydrolysis of ATP in the presence of single-stranded DNA, the ATP-dependent uptake of single-stranded DNA by duplex DNA, and the ATP-dependent hybridization of homologous single-stranded DNAs. It interacts with LexA causing its activation and leading to its autocatalytic cleavage. This chain is Protein RecA, found in Neisseria meningitidis serogroup B (strain ATCC BAA-335 / MC58).